We begin with the raw amino-acid sequence, 287 residues long: Probable aquaporin PIP1-5 (287 aa).

M1 bears the N-acetylmethionine mark. Residues M1–E34 are disordered. The Cytoplasmic portion of the chain corresponds to M1–G55. The chain crosses the membrane as a helical span at residues I56–V76. Topologically, residues K77–A92 are extracellular. The chain crosses the membrane as a helical span at residues W93–H113. Residues I114–A133 are Cytoplasmic-facing. Residues N115–A117 carry the NPA 1 motif. Residues L134–F154 traverse the membrane as a helical segment. Over Q155 to K175 the chain is Extracellular. Residues G176 to A196 traverse the membrane as a helical segment. The Cytoplasmic segment spans residues T197–P209. Residues I210–I230 traverse the membrane as a helical segment. Residues T231 to W257 are Extracellular-facing. Residues N236–A238 carry the NPA 2 motif. A helical membrane pass occupies residues I258 to I278. At R279–T287 the chain is on the cytoplasmic side. S285 is modified (phosphoserine).

Belongs to the MIP/aquaporin (TC 1.A.8) family. PIP (TC 1.A.8.11) subfamily. In terms of tissue distribution, predominantly expressed in green siliques. Also expressed above ground, in roots and flower buds.

It localises to the cell membrane. In terms of biological role, aquaporins facilitate the transport of water and small neutral solutes across cell membranes. This is Probable aquaporin PIP1-5 (PIP1-5) from Arabidopsis thaliana (Mouse-ear cress).